We begin with the raw amino-acid sequence, 586 residues long: Protein HOL1 (586 aa).

The Extracellular portion of the chain corresponds to 1–66 (MDKYTNRDHP…NWSSWRKLAH (66 aa)). Residues 67–87 (FGLMAFITAFTAATSNDAGAA) form a helical membrane-spanning segment. The Cytoplasmic segment spans residues 88–103 (QDSLNEIYGISYDSMN). The helical transmembrane segment at 104 to 124 (TGAGVLFLGIGWSTLFLAPFA) threads the bilayer. Topologically, residues 125-130 (NLYGRK) are extracellular. Residues 131–151 (ITYIVCTTLGLFGALWFALAK) traverse the membrane as a helical segment. Topologically, residues 152–189 (RTSDTIWSQLFVGISESCAEAQVQLSLSDIFFQHQLGS) are cytoplasmic. A helical membrane pass occupies residues 190–210 (VLTVYIMCTSIGTFLGPLIAG). Over 211-219 (YISAFTNFR) the chain is Extracellular. A helical transmembrane segment spans residues 220–240 (WVGWVAVIISGGLLITIIFGC). The Cytoplasmic segment spans residues 241–362 (EETYFDRGQY…YFKYLKINLR (122 aa)). The chain crosses the membrane as a helical span at residues 363-383 (MFLFPPVWLSGMFWGIQDVFL). Residues 384–413 (TFYLTTQESAYYEPPWNYSDFGVAIMNVPT) lie on the Extracellular side of the membrane. The chain crosses the membrane as a helical span at residues 414–434 (LIGAVIGCICAGIVSDYFVLW). Over 435 to 448 (MARHNRGILEAEFR) the chain is Cytoplasmic. Residues 449 to 469 (LYFSIATAIIGPAGLLMFGIG) form a helical membrane-spanning segment. Residues 470 to 477 (TARQWPWQ) are Extracellular-facing. The chain crosses the membrane as a helical span at residues 478-498 (AIYVGLGFVGFAWGCSGDIAM). Residues 499 to 508 (AYLMDCYPDM) are Cytoplasmic-facing. Residues 509-529 (VLEGMVCTAIINNTISCIFTF) form a helical membrane-spanning segment. Over 530-544 (TCSDWLAASGTENTY) the chain is Extracellular. The chain crosses the membrane as a helical span at residues 545–565 (IALAVINFGITAFALPMYYYG). Over 566–586 (KRIRLWTKRWYLQSVNLRDGV) the chain is Cytoplasmic.

Its subcellular location is the membrane. Seems to be involved in the uptake of several cations and of histidinol. The sequence is that of Protein HOL1 (HOL1) from Saccharomyces cerevisiae (strain ATCC 204508 / S288c) (Baker's yeast).